The sequence spans 159 residues: Style cell-cycle inhibitor 1 (159 aa).

A disordered region spans residues 1-86 (MVSERSSKEK…SDHKLKEGIP (86 aa)). The span at 15–50 (ARSEDSSSSDYEEKVKRHRGTEKDDERRSRRSDKKD) shows a compositional bias: basic and acidic residues. The span at 51-63 (KKSHKHHKSSTSK) shows a compositional bias: basic residues. Over residues 64–85 (KSKDDKPKKKHTESDHKLKEGI) the composition is skewed to basic and acidic residues.

The protein localises to the nucleus. Its function is as follows. Component of the auxin signaling transduction pathway that regulates cell proliferation and differentiation during flowers stigmas and styles development. Involved in the regulation of auxin-related genes. The chain is Style cell-cycle inhibitor 1 from Arabidopsis thaliana (Mouse-ear cress).